Reading from the N-terminus, the 492-residue chain is Ketol-acid reductoisomerase (NADP(+)) (492 aa).

The 195-residue stretch at 14 to 208 folds into the KARI N-terminal Rossmann domain; that stretch reads LDQLGRCRFM…GGHKAGVLES (195 aa). NADP(+)-binding positions include 45-48, Arg68, Arg76, Ser78, and 108-110; these read CGAQ and DKQ. His132 is a catalytic residue. Gly158 contributes to the NADP(+) binding site. 2 KARI C-terminal knotted domains span residues 209 to 344 and 345 to 485; these read SFVA…NAPK and YDGK…MTDM. Residues Asp217, Glu221, Glu389, and Glu393 each contribute to the Mg(2+) site. A substrate-binding site is contributed by Ser414.

Belongs to the ketol-acid reductoisomerase family. It depends on Mg(2+) as a cofactor.

The enzyme catalyses (2R)-2,3-dihydroxy-3-methylbutanoate + NADP(+) = (2S)-2-acetolactate + NADPH + H(+). The catalysed reaction is (2R,3R)-2,3-dihydroxy-3-methylpentanoate + NADP(+) = (S)-2-ethyl-2-hydroxy-3-oxobutanoate + NADPH + H(+). Its pathway is amino-acid biosynthesis; L-isoleucine biosynthesis; L-isoleucine from 2-oxobutanoate: step 2/4. It functions in the pathway amino-acid biosynthesis; L-valine biosynthesis; L-valine from pyruvate: step 2/4. Functionally, involved in the biosynthesis of branched-chain amino acids (BCAA). Catalyzes an alkyl-migration followed by a ketol-acid reduction of (S)-2-acetolactate (S2AL) to yield (R)-2,3-dihydroxy-isovalerate. In the isomerase reaction, S2AL is rearranged via a Mg-dependent methyl migration to produce 3-hydroxy-3-methyl-2-ketobutyrate (HMKB). In the reductase reaction, this 2-ketoacid undergoes a metal-dependent reduction by NADPH to yield (R)-2,3-dihydroxy-isovalerate. The sequence is that of Ketol-acid reductoisomerase (NADP(+)) from Haemophilus influenzae (strain PittEE).